Here is a 673-residue protein sequence, read N- to C-terminus: G-protein-signaling modulator 1 (673 aa).

The segment at Met1–Arg507 is mediates association with membranes. TPR repeat units lie at residues Cys28–Asp61, Ser66–Ile99, Ala106–Gln139, Ala146–Val178, Glu180–Leu199, Gly206–Phe239, Arg246–Leu279, Ala286–Leu319, and Gly326–Ile359. The tract at residues Asp361–Ile485 is interaction with STK11/LKB1. Position 410 is a phosphoserine (Ser410). Position 418 is an omega-N-methylarginine (Arg418). The segment covering Pro420–Gly439 has biased composition (basic and acidic residues). A disordered region spans residues Pro420–Asp475. 5 positions are modified to phosphoserine: Ser442, Ser467, Ser469, Ser490, and Ser491. A compositionally biased stretch (basic and acidic residues) spans Lys451–Ser467. Positions Glu493–Leu515 constitute a GoLoco 1 domain. The interval Met508–Val531 is disordered. A compositionally biased stretch (low complexity) spans Glu516 to Ala528. A phosphoserine mark is found at Ser543 and Ser567. 3 GoLoco domains span residues Thr546–Val568, Gly594–Pro616, and Asp628–Leu650. A disordered region spans residues Asp644–Ser673. A Phosphoserine modification is found at Ser653. A compositionally biased stretch (polar residues) spans Pro664–Ser673.

It belongs to the GPSM family. Interacts with GNAI1 and GNAI2 preferentially in their GDP-bound state. May also interact with GNAO1. Interacts with INSC/inscuteable and FRMPD1. Interacts with GNAI3. Interacts with STK11/LKB1 and MACF1. In terms of processing, phosphorylation regulates interaction with G(i/o) alpha. In terms of tissue distribution, expressed in neural progenitor cells (at protein level).

It is found in the cytoplasm. The protein resides in the cytosol. Its subcellular location is the endoplasmic reticulum membrane. It localises to the golgi apparatus membrane. The protein localises to the cell membrane. Functionally, guanine nucleotide dissociation inhibitor (GDI) which functions as a receptor-independent activator of heterotrimeric G-protein signaling. Keeps G(i/o) alpha subunit in its GDP-bound form thus uncoupling heterotrimeric G-proteins signaling from G protein-coupled receptors. Controls spindle orientation and asymmetric cell fate of cerebral cortical progenitors. May also be involved in macroautophagy in intestinal cells. May play a role in drug addiction. The sequence is that of G-protein-signaling modulator 1 (Gpsm1) from Mus musculus (Mouse).